A 244-amino-acid polypeptide reads, in one-letter code: MLIKSIGMYLIGILILFIALYPRHSFAFEPNIDFNAPDWVEERESADNDIPELPRAGSLFGSGDKPLFSDRRAMKPDDLITIVISENANANFTTNKNYNGASGGNVTPPSIEYTGNNEEQKQIVSELNDQAAYNLTKANNTSNFQGGGAQTRSEALNATITARIVKVLDNNTYFIHGRREVLVDGEKQILELSGVVRSFDISKDNVVQSKHIANAKIAYTSLGPISDTNHKKPVSDGIESLYPF.

An N-terminal signal peptide occupies residues 1–27 (MLIKSIGMYLIGILILFIALYPRHSFA).

The protein belongs to the FlgH family. The basal body constitutes a major portion of the flagellar organelle and consists of four rings (L,P,S, and M) mounted on a central rod.

Its subcellular location is the cell outer membrane. The protein resides in the bacterial flagellum basal body. Functionally, assembles around the rod to form the L-ring and probably protects the motor/basal body from shearing forces during rotation. In Helicobacter hepaticus (strain ATCC 51449 / 3B1), this protein is Flagellar L-ring protein (flgH).